The primary structure comprises 686 residues: MAPPCSISSASHLLITASLPKPSLRPPRLPHPKPLPAALLALAAAAPTLPALADVPAPPPSPTQDVQVLEAPSPAANPFSNALLTAPKPTSSAAADLPEGAQWRYSEFLSAVKKGKVERVRFSKDGGLLQLTAIDGRRATVVVPNDPDLIDILATNGVDISVAEGDAAGPGGFLAFVGNLLFPFLAFAGLFFLFRRAQGGPGAGPGGLGGPMDFGRSKSKFQEVPETGVTFVDVAGADQAKLELQEVVDFLKNPDKYTALGAKIPKGCLLVGPPGTGKTLLARAVAGEAGVPFFSCAASEFVELFVGVGASRVRDLFEKAKAKAPCIVFIDEIDAVGRQRGAGLGGGNDEREQTINQLLTEMDGFAGNSGVIVLAATNRPDVLDAALLRPGRFDRQVTVDRPDVAGRVKILEVHSRGKALAKDVDFEKIARRTPGFTGADLQNLMNEAAILAARRDLKEISKDEISDALERIIAGPEKKNAVVSEEKRRLVAYHEAGHALVGALMPEYDPVAKISIIPRGQAGGLTFFAPSEERLESGLYSRSYLENQMAVALGGRVAEEVIFGQENVTTGASNDFMQVSRVARQMVERFGFSKKIGQVAIGGPGGNPFLGQQMSSQKDYSMATADVVDAEVRELVEKAYSRATQIITTHIDILHKLAQLLMEKETVDGEEFMSLFIDGQAELFVA.

The N-terminal 16 residues, M1–T16, are a transit peptide targeting the chloroplast. Residues F173 to L193 traverse the membrane as a helical segment. G272 to T279 contributes to the ATP binding site. Position 494 (H494) interacts with Zn(2+). E495 is an active-site residue. Positions 498 and 575 each coordinate Zn(2+).

In the N-terminal section; belongs to the AAA ATPase family. It in the C-terminal section; belongs to the peptidase M41 family. It depends on Zn(2+) as a cofactor.

The protein resides in the plastid. The protein localises to the chloroplast thylakoid membrane. Functionally, probable ATP-dependent zinc metallopeptidase. The sequence is that of ATP-dependent zinc metalloprotease FTSH 1, chloroplastic (FTSH1) from Oryza sativa subsp. japonica (Rice).